A 708-amino-acid chain; its full sequence is MGNASSIVQTINVTGDGNVFKPSAETSSTAVPSLSLSPGMLNPGGVPWIAVGDETSVTSPGALRRMTSKDIPETAIINTDNSSGAVPSESALVPYIDEPLVVVTEHAITNFTKAEMALEFNREFLDKMRVLSVSPKYSDLLTYVDCYVGVSARQALNNFQKQVPVITPTRQTMYVDSIQAALKALEKWEIDLRVAQTLLPTNVPIGEVSCPMQSVVKLLDDQLPDDSLIRRYPKEAAVALAKRNGGIQWMDVSEGTVMNEAVNAVAASALAPSASAPPLEEKSKLTEQAMDLVTAAEPEIIASLAPVPAPVFAIPPKPADYNVRTLRIDEATWLRMIPKSMNTPFQIQVTDNTGTNWHLNLRGGTRVVNLDQIAPMRFVLDLGGKSYKETSWDPNGKKVGFIVFQSKIPFELWTAASQIGQATVVNYVQLYAEDSSFTAQSIIATTSLAYNYEPEQLNKTDPEMNYYLLATFIDSAAITPTNMTQPDVWDALLTMSPLSAGEVTVKGAVVSEVVPADLIGSYTPESLNASLPNDAARCMIDRASKIAEAIKIDDDAGPDEYSPNSVPIQGQLAISQLETGYGVRIFNPKGILSKIASRAMQAFIGDPSTIITQAAPVLSDKNNWIALAQGVKTSLRTKSLSAGVKTAVSKLSSSESIQNWTQGFLDKVSAHFPAPKPDCPTSGDSGESSNRRVKRDSYAGVVKRGYTR.

The N-myristoyl glycine; by host moiety is linked to residue glycine 2. N-linked (GlcNAc...) asparagine; by host glycans are attached at residues asparagine 3, asparagine 12, asparagine 81, asparagine 110, asparagine 458, asparagine 482, asparagine 528, and asparagine 659. A disordered region spans residues 675 to 708; the sequence is PKPDCPTSGDSGESSNRRVKRDSYAGVVKRGYTR.

It belongs to the orthoreovirus mu-1 protein family. Heterohexamer of three sigma-3 and three Mu-1 proteins. Post-translationally, cleaved during the endosomal proteolytic disassembly of the outer capsid. Mu-1 is proteolytically cleaved into mu-1N and mu-1C during the maturation step to generate the ISVP. Cleavage of mu-1 to mu-1C is dependent on myristoylation and binding to sigma-3 protein. Mu-1C is further cleaved into delta (59 kDa), and phi (13 kDa) segments during entry into the host cell cytoplasm. In terms of processing, mu-1 and mu-1N are N-terminally myristoylated. This acylation is essential for the membrane fusion activity.

The protein localises to the virion. Its subcellular location is the host cell membrane. The protein resides in the host endoplasmic reticulum. It localises to the host mitochondrion. Functionally, major outer capsid protein involved in host cell membrane penetration. In the endocytic compartment, outer-capsid protein sigma-3 is removed by cathepsin proteases, which exposes the viral membrane-penetration protein mu-1. Both myristoylated peptides mu-1N and phi are released during infectious subvirion particles (ISVP) formation in the endosome. They associate with host membranes and mu-1N induces permeabilization and delivery of transcriptionally active viral particles into the host cell cytoplasm. Seems to induce apoptosis in the host cell. In terms of biological role, the viral outer shell polypeptides, of which mu-1 is one, impose structural constraints that prevent elongation of nascent transcripts by the RNA-dependent RNA polymerase lambda-3. This Mammalia (T3D) protein is Outer capsid protein mu-1 (M2).